Reading from the N-terminus, the 226-residue chain is ATP synthase subunit a (226 aa).

6 helical membrane-spanning segments follow: residues F17 to A37, L79 to F99, S105 to I125, F134 to V154, L176 to L196, and F199 to A219.

The protein belongs to the ATPase A chain family. In terms of assembly, F-type ATPases have 2 components, CF(1) - the catalytic core - and CF(0) - the membrane proton channel. CF(1) has five subunits: alpha(3), beta(3), gamma(1), delta(1), epsilon(1). CF(0) has three main subunits: a(1), b(2) and c(9-12). The alpha and beta chains form an alternating ring which encloses part of the gamma chain. CF(1) is attached to CF(0) by a central stalk formed by the gamma and epsilon chains, while a peripheral stalk is formed by the delta and b chains.

It is found in the cell inner membrane. In terms of biological role, key component of the proton channel; it plays a direct role in the translocation of protons across the membrane. The polypeptide is ATP synthase subunit a (Campylobacter jejuni subsp. jejuni serotype O:23/36 (strain 81-176)).